A 94-amino-acid polypeptide reads, in one-letter code: Large ribosomal subunit protein uL29 (94 aa).

Positions 65–94 (ANPGERKSRVFSRAKRKKKNLARLSAKAKG) are disordered. Positions 73–94 (RVFSRAKRKKKNLARLSAKAKG) are enriched in basic residues.

This sequence belongs to the universal ribosomal protein uL29 family.

The sequence is that of Large ribosomal subunit protein uL29 from Leptospira interrogans serogroup Icterohaemorrhagiae serovar copenhageni (strain Fiocruz L1-130).